Reading from the N-terminus, the 599-residue chain is Elongation factor 4 (599 aa).

Positions 2-184 (KHIRNFSIIA…RLVRDIPPPE (183 aa)) constitute a tr-type G domain. Residues 14-19 (DHGKST) and 131-134 (NKID) each bind GTP.

This sequence belongs to the TRAFAC class translation factor GTPase superfamily. Classic translation factor GTPase family. LepA subfamily.

It localises to the cell inner membrane. It carries out the reaction GTP + H2O = GDP + phosphate + H(+). Functionally, required for accurate and efficient protein synthesis under certain stress conditions. May act as a fidelity factor of the translation reaction, by catalyzing a one-codon backward translocation of tRNAs on improperly translocated ribosomes. Back-translocation proceeds from a post-translocation (POST) complex to a pre-translocation (PRE) complex, thus giving elongation factor G a second chance to translocate the tRNAs correctly. Binds to ribosomes in a GTP-dependent manner. The sequence is that of Elongation factor 4 from Erwinia tasmaniensis (strain DSM 17950 / CFBP 7177 / CIP 109463 / NCPPB 4357 / Et1/99).